Reading from the N-terminus, the 281-residue chain is MDTLLFVLKSIVLGIVEGVTEFLPISSTGHLIIFENIMGFKSASPNYVKMYTYVIQLGAIMAVVLLYWKKIKETVINFFPGKVGYEKSGFKFWFMIFIACIPGAAVKLLLDAPVEKYLMTPVSVAIVLILGGLWMIYAEKKFRNNNLGKQKLSVTPKQALIIGAFQCLAIIPGMSRSASTIIGGWVAGLSTVVAAEFSFFLAIPVMFGYSLLEIIRIGGLTSLPAAELISLVVGFIVAFIVAVAVISQFISYLKRKPLKSFAIYRMIFAVIVLIAGFMGFF.

8 helical membrane-spanning segments follow: residues 5–25, 48–68, 92–112, 118–138, 154–174, 192–212, 226–246, and 261–281; these read LFVL…FLPI, VKMY…LLYW, FWFM…LLDA, LMTP…MIYA, VTPK…IPGM, VVAA…YSLL, AELI…VAVI, and FAIY…MGFF.

Belongs to the UppP family.

The protein resides in the cell membrane. The catalysed reaction is di-trans,octa-cis-undecaprenyl diphosphate + H2O = di-trans,octa-cis-undecaprenyl phosphate + phosphate + H(+). Its function is as follows. Catalyzes the dephosphorylation of undecaprenyl diphosphate (UPP). Confers resistance to bacitracin. The polypeptide is Undecaprenyl-diphosphatase (Ruminiclostridium cellulolyticum (strain ATCC 35319 / DSM 5812 / JCM 6584 / H10) (Clostridium cellulolyticum)).